A 394-amino-acid polypeptide reads, in one-letter code: NAD(P)H-quinone oxidoreductase subunit H (394 aa).

It belongs to the complex I 49 kDa subunit family. NDH-1 can be composed of about 15 different subunits; different subcomplexes with different compositions have been identified which probably have different functions.

The protein resides in the cellular thylakoid membrane. It catalyses the reaction a plastoquinone + NADH + (n+1) H(+)(in) = a plastoquinol + NAD(+) + n H(+)(out). The enzyme catalyses a plastoquinone + NADPH + (n+1) H(+)(in) = a plastoquinol + NADP(+) + n H(+)(out). In terms of biological role, NDH-1 shuttles electrons from an unknown electron donor, via FMN and iron-sulfur (Fe-S) centers, to quinones in the respiratory and/or the photosynthetic chain. The immediate electron acceptor for the enzyme in this species is believed to be plastoquinone. Couples the redox reaction to proton translocation, and thus conserves the redox energy in a proton gradient. Cyanobacterial NDH-1 also plays a role in inorganic carbon-concentration. This Synechococcus sp. (strain RCC307) protein is NAD(P)H-quinone oxidoreductase subunit H.